We begin with the raw amino-acid sequence, 229 residues long: Large ribosomal subunit protein uL1 (229 aa).

Belongs to the universal ribosomal protein uL1 family. As to quaternary structure, part of the 50S ribosomal subunit.

Its function is as follows. Binds directly to 23S rRNA. The L1 stalk is quite mobile in the ribosome, and is involved in E site tRNA release. Protein L1 is also a translational repressor protein, it controls the translation of the L11 operon by binding to its mRNA. The sequence is that of Large ribosomal subunit protein uL1 from Latilactobacillus sakei subsp. sakei (strain 23K) (Lactobacillus sakei subsp. sakei).